Reading from the N-terminus, the 127-residue chain is MAKASTKKRKVIVESIGEAHISATFNNIIISLTNKKGEVVSWSSAGKMGFRGSKKNTPYAAQMAAEDCSKVAMEAGMKKVKVYVKGPGNGRESAIRSLHNAGIEVTEIIDVTPLPHNGCRPPKRRRV.

This sequence belongs to the universal ribosomal protein uS11 family. As to quaternary structure, part of the 30S ribosomal subunit. Interacts with proteins S7 and S18. Binds to IF-3.

Its function is as follows. Located on the platform of the 30S subunit, it bridges several disparate RNA helices of the 16S rRNA. Forms part of the Shine-Dalgarno cleft in the 70S ribosome. In Flavobacterium psychrophilum (strain ATCC 49511 / DSM 21280 / CIP 103535 / JIP02/86), this protein is Small ribosomal subunit protein uS11.